A 557-amino-acid chain; its full sequence is Formate--tetrahydrofolate ligase (557 aa).

66-73 (TPAGEGKT) contributes to the ATP binding site.

Belongs to the formate--tetrahydrofolate ligase family.

The catalysed reaction is (6S)-5,6,7,8-tetrahydrofolate + formate + ATP = (6R)-10-formyltetrahydrofolate + ADP + phosphate. Its pathway is one-carbon metabolism; tetrahydrofolate interconversion. The polypeptide is Formate--tetrahydrofolate ligase (Bartonella tribocorum (strain CIP 105476 / IBS 506)).